Here is a 71-residue protein sequence, read N- to C-terminus: uncharacterized protein (71 aa).

Residues 1–10 (MHRKKRKKEK) show a composition bias toward basic residues. The segment at 1–20 (MHRKKRKKEKKRTEKDNTTN) is disordered. A helical transmembrane segment spans residues 21–43 (LPPLFLFPCSLSLPTLLAPVHYI).

The protein resides in the membrane. This is an uncharacterized protein from Saccharomyces cerevisiae (strain ATCC 204508 / S288c) (Baker's yeast).